The chain runs to 481 residues: Protein hedgehog (481 aa).

A lipid anchor (N-palmitoyl cysteine) is attached at cysteine 93. Ca(2+) is bound by residues glutamate 157, glutamate 158, aspartate 163, threonine 193, glutamate 194, aspartate 197, and aspartate 199. Glycine 265 carries Cholesterol glycine ester lipidation.

Belongs to the hedgehog family. In terms of assembly, interacts with shf. Post-translationally, the C-terminal part of the hedgehog protein precursor displays an autoproteolysis activity that results in the cleavage of the full-length protein into two parts (N-product and C-product). In addition, the C-terminal part displays a cholesterol transferase activity that results by the covalent attachment of a cholesterol moiety to the C-terminal of the newly generated N-product. The N-product is the active species in both local and long-range signaling, whereas the C-product has no signaling activity. In terms of processing, cholesterylation is required for N-product targeting to lipid rafts and multimerization. N-palmitoylation by Rasp of the hedgehog N-product, within the secretory pathway, is required for the embryonic and larval patterning activities of the hedgehog signal.

The protein resides in the nucleus. The protein localises to the cytoplasm. It localises to the cell membrane. The catalysed reaction is glycyl-L-cysteinyl-[protein] + cholesterol + H(+) = [protein]-C-terminal glycyl cholesterol ester + N-terminal L-cysteinyl-[protein]. In terms of biological role, the C-terminal part of the hedgehog protein precursor displays an autoproteolysis activity that results in the cleavage of the full-length protein into two parts (N-product and C-product). In addition, the C-terminal part displays a cholesterol transferase activity that results by the covalent attachment of a cholesterol moiety to the C-terminal of the newly generated N-product. Once cleaved, the C-product has no signaling activity and diffuses from the cell. The dually lipidated hedgehog protein N-product is a morphogen which is essential for a variety of patterning events during development. Establishes the anterior-posterior axis of the embryonic segments and patterns the larval imaginal disks. Binds to the patched (ptc) receptor, which functions in association with smoothened (smo), to activate the transcription of target genes wingless (wg), decapentaplegic (dpp) and ptc. In the absence of hh, ptc represses the constitutive signaling activity of smo through fused (fu). Essential component of a signaling pathway which regulates the Duox-dependent gut immune response to bacterial uracil; required to activate Cad99C-dependent endosome formation, norpA-dependent Ca2+ mobilization and p38 MAPK, which are essential steps in the Duox-dependent production of reactive oxygen species (ROS) in response to intestinal bacterial infection. During photoreceptor differentiation, it up-regulates transcription of Ubr3, which in turn promotes the hh-signaling pathway by mediating the ubiquitination and degradation of cos. This chain is Protein hedgehog (hh-1), found in Drosophila pseudoobscura pseudoobscura (Fruit fly).